Consider the following 125-residue polypeptide: Holo-[acyl-carrier-protein] synthase (125 aa).

Residues Asp-8 and Glu-57 each coordinate Mg(2+).

It belongs to the P-Pant transferase superfamily. AcpS family. Mg(2+) is required as a cofactor.

Its subcellular location is the cytoplasm. It catalyses the reaction apo-[ACP] + CoA = holo-[ACP] + adenosine 3',5'-bisphosphate + H(+). Functionally, transfers the 4'-phosphopantetheine moiety from coenzyme A to a Ser of acyl-carrier-protein. This chain is Holo-[acyl-carrier-protein] synthase, found in Laribacter hongkongensis (strain HLHK9).